We begin with the raw amino-acid sequence, 372 residues long: MSLFFLWLVTYYVGTLGTHTEIKRVAEEKVTLPCHHQLGLPEKDTLDIEWLLTDNEGNQKVVITYSSRHVYNNLTEEQKGRVAFASNFLAGDASLQIEPLKPSDEGRYTCKVKNSGRYVWSHVILKVLVRPSKPKCELEGEPTEGSDLTLQCESASGTKPIVYYWQRIREKEGEDEHLPPKSRIDYNNPGRVLLQNLTMASSGLYQCTAGNEAGKESCVVRVTVQYVQSIGMVAGAVTGIVAGALLIFLLIWLLIRRKSKERYEEEDRPNEIREDAEAPRARLVKPSSSSSGSRSSRSGSSSTRSTGNSASRSQRTLSSEAAPQPGLATQAYSLIGPEVRGSEPKKAHHTTLTKAETTLSTMPSQSRAFQTV.

The N-terminal stretch at 1-17 is a signal peptide; it reads MSLFFLWLVTYYVGTLG. Ig-like C2-type domains are found at residues 18-126 and 134-223; these read THTE…VILK and PKCE…VRVT. Topologically, residues 18–234 are extracellular; that stretch reads THTEIKRVAE…QYVQSIGMVA (217 aa). 2 disulfide bridges follow: Cys34-Cys110 and Cys152-Cys207. Residues Asn73 and Asn196 are each glycosylated (N-linked (GlcNAc...) asparagine). A helical membrane pass occupies residues 235 to 255; it reads GAVTGIVAGALLIFLLIWLLI. The Cytoplasmic segment spans residues 256–372; it reads RRKSKERYEE…PSQSRAFQTV (117 aa). Positions 263-280 are enriched in basic and acidic residues; that stretch reads YEEEDRPNEIREDAEAPR. The disordered stretch occupies residues 263–372; the sequence is YEEEDRPNEI…PSQSRAFQTV (110 aa). 2 stretches are compositionally biased toward low complexity: residues 287–313 and 352–361; these read SSSS…ASRS and LTKAETTLST. The span at 362 to 372 shows a compositional bias: polar residues; the sequence is MPSQSRAFQTV.

In terms of tissue distribution, predominantly expressed in the white adipose tissue.

Its subcellular location is the cell junction. The protein resides in the tight junction. It localises to the cell membrane. In terms of biological role, may be involved in the cell-cell adhesion. May play a role in adipocyte differentiation and development of obesity. Is required for normal small intestine development. The sequence is that of CXADR-like membrane protein (Clmp) from Rattus norvegicus (Rat).